Consider the following 370-residue polypeptide: Holliday junction branch migration complex subunit RuvB (370 aa).

The segment at 1 to 182 (MDERMMTSAK…FGVIHRLEYY (182 aa)) is large ATPase domain (RuvB-L). ATP contacts are provided by residues Leu21, Arg22, Gly63, Lys66, Thr67, Thr68, 129–131 (EDF), Arg172, Tyr182, and Arg219. Thr67 contacts Mg(2+). Residues 183–253 (RPDELEFIIL…VAREALRRLE (71 aa)) form a small ATPAse domain (RuvB-S) region. A head domain (RuvB-H) region spans residues 256 to 370 (PRGLDTTDQR…AEQAALSFDE (115 aa)). Residues Arg311 and Arg316 each coordinate DNA.

This sequence belongs to the RuvB family. As to quaternary structure, homohexamer. Forms an RuvA(8)-RuvB(12)-Holliday junction (HJ) complex. HJ DNA is sandwiched between 2 RuvA tetramers; dsDNA enters through RuvA and exits via RuvB. An RuvB hexamer assembles on each DNA strand where it exits the tetramer. Each RuvB hexamer is contacted by two RuvA subunits (via domain III) on 2 adjacent RuvB subunits; this complex drives branch migration. In the full resolvosome a probable DNA-RuvA(4)-RuvB(12)-RuvC(2) complex forms which resolves the HJ.

It is found in the cytoplasm. The enzyme catalyses ATP + H2O = ADP + phosphate + H(+). Its function is as follows. The RuvA-RuvB-RuvC complex processes Holliday junction (HJ) DNA during genetic recombination and DNA repair, while the RuvA-RuvB complex plays an important role in the rescue of blocked DNA replication forks via replication fork reversal (RFR). RuvA specifically binds to HJ cruciform DNA, conferring on it an open structure. The RuvB hexamer acts as an ATP-dependent pump, pulling dsDNA into and through the RuvAB complex. RuvB forms 2 homohexamers on either side of HJ DNA bound by 1 or 2 RuvA tetramers; 4 subunits per hexamer contact DNA at a time. Coordinated motions by a converter formed by DNA-disengaged RuvB subunits stimulates ATP hydrolysis and nucleotide exchange. Immobilization of the converter enables RuvB to convert the ATP-contained energy into a lever motion, pulling 2 nucleotides of DNA out of the RuvA tetramer per ATP hydrolyzed, thus driving DNA branch migration. The RuvB motors rotate together with the DNA substrate, which together with the progressing nucleotide cycle form the mechanistic basis for DNA recombination by continuous HJ branch migration. Branch migration allows RuvC to scan DNA until it finds its consensus sequence, where it cleaves and resolves cruciform DNA. The protein is Holliday junction branch migration complex subunit RuvB of Heliobacterium modesticaldum (strain ATCC 51547 / Ice1).